The primary structure comprises 567 residues: MTGDGSAHISKNNQNQHKDRFKFIVNDKSILGPQWLSLYQTDGKVTFAKSHFEQAMMNVIREPNINSTVILRADILKEINHAAEAGSEPKFDESVLKKFEIDNGNESGEEDVKKINIEDLNIRSCETSESLKLSPVHEFVRRIIPRNFYKDAIINQTCLILNSKDPNFQETSLIVYTPHINSEKDCPFYIPRTQSVGILLHQSVLSVHYIPFPEDKTAFTDESERVVRTAYRLLQTANKHSKGVMQGYEKRVNHDQVVNKVNFQNTYIVLKKKYSKFLVENWAESTDPKKHVFEDIAIAAFLIELWIKVYGPDFRSKMQFRDLGCGNGALCYILLSESIKGLGIDARKRKSWSIYPPEVQSSLKEQVIIPSILLRPHPALKRQVPHLEHNGRFFPVKVTHEVIAPATVVYSSEDLLKSPQVNTAEFPPDTFIIGNHSDELTCWIPLLGHPYMVIPCCSHNFSGQRVRFNVRKRSPRSNEIKNQNNSKSTYSGLVDHVEYISSRVGWKVEKEMLRIPSTRNAAIIGVENATLKHFPTQAVYDMIWEDGGAEGWIQNTMSLLKRNPRNH.

Ser107 carries the post-translational modification Phosphoserine.

The protein belongs to the TRM44 family.

The protein localises to the cytoplasm. It catalyses the reaction uridine(44) in tRNA(Ser) + S-adenosyl-L-methionine = 2'-O-methyluridine(44) in tRNA(Ser) + S-adenosyl-L-homocysteine + H(+). Its function is as follows. tRNA (uracil-O(2)-)-methyltransferase, which catalyzes the formation of O(2)-methyluracil at position 44 (Um44) in tRNA(Ser). This is tRNA (uracil-O(2)-)-methyltransferase (TRM44) from Saccharomyces cerevisiae (strain ATCC 204508 / S288c) (Baker's yeast).